The following is a 151-amino-acid chain: Small ribosomal subunit protein uS11 (151 aa).

The disordered stretch occupies residues Glu130–Leu151. Residues Arg142–Leu151 are compositionally biased toward basic residues.

This sequence belongs to the universal ribosomal protein uS11 family.

The chain is Small ribosomal subunit protein uS11 from Aedes aegypti (Yellowfever mosquito).